A 3434-amino-acid chain; its full sequence is MSKKPGGPGRNRAINMLKRGIPRVFPLVGVKRVVMGLLDGRGPVRFVLALMTFFKFTALAPTKALLGRWKRINKTTAMKHLTSFKKELGTMINVVNNRGTKKKRGNNGPGLVMIITLMTVVSMVSSLKLSNFQGKVMMTINATDMADVIVVPTQHGKNQCWIRAMDVGYMCDDTITYECPKLDAGNDPEDIDCWCDKQPMYVHYGRCTRTRHSKRSRRSIAVQTHGESMLANKKDAWLDSTKASRYLMKTENWIIRNPGYAFVAVLLGWMLGSNNGQRVVFVVLLLLVAPAYSFNCLGMSNRDFLEGVSGATWVDVVLEGDSCITIMAKDKPTIDIKMMETEATNLAEVRSYCYLATVSDVSTVSNCPTTGEAHNPKRAEDTYVCKSGVTDRGWGNGCGLFGKGSIDTCANFTCSLKAMGRMIQPENVKYEVGIFIHGSTSSDTHGNYSSQLGASQAGRFTITPNSPAITVKMGDYGEISVECEPRNGLNTEAYYIMSVGTKHFLVHREWFNDLALPWTSPASSNWRNREILLEFEEPHATKQSVVALGSQEGALHQALAGAVPVSFSGSVKLTSGHLKCRVKMEKLTLKGTTYGMCTEKFSFAKNPADTGHGTVVLELQYTGSDGPCKIPISIVASLSDLTPIGRMVTANPYVASSEANAKVLVEMEPPFGDSYIVVGRGDKQINHHWHKAGSSIGKAFITTIKGAQRLAALGDTAWDFGSVGGIFNSVGKAVHQVFGGAFRTLFGGMSWITQGLMGALLLWMGVNARDRSIALVMLATGGVLLFLATNVHADSGCAIDVGRRELRCGQGIFIHNDVEAWVDRYKFMPETPKQLAKVIEQAHAKGICGLRSVSRLEHVMWENIRDELNTLLRENAVDLSVVVEKPKGMYKSAPQRLALTSEEFEIGWKAWGKSLVFAPELANHTFVVDGPETKECPDAKRAWNSLEIEDFGFGIMSTRVWLKVREHNTTDCDSSIIGTAVKGDIAVHSDLSYWIESHKNTTWRLERAVFGEIKSCTWPETHTLWSDGVVESDLVVPVTLAGPKSNHNRREGYKVQSQGPWDEEDIVLDFDYCPGTTVTITEACGKRGPSIRTTTSSGRLVTDWCCRSCTLPPLRYRTKNGCWYGMEIRPMKHDETTLVKSSVSAHRSDMIDPFQLGLLVMFLATQEVLRKRWTARLTVPAIVGALLVLILGGITYTDLLRYVLLVGAAFAEANSGGDVVHLALIAAFKIQPGFLAMTFLRGKWTNQENILLALGAAFFQMAATDLNFSLPGILNATATAWMLLRAATQPSTSAIVMPLLCLLAPGMRLLYLDTYRITLIIIGICSLIGERRRAAAKKKGAVLLGLALTSTGQFSASVMAAGLMACNPNKKRGWPATEVLTAVGLMFAIVGGLAELDVDSMSIPFVLAGLMAVSYTISGKSTDLWLERAADITWETDAAITGTSQRLDVKLDDDGDFHLINDPGVPWKIWVIRMTALGFAAWTPWAIIPAGIGYWLTVKYAKRGGVFWDTPAPRTYPKGDTSPGVYRIMSRYILGTYQAGVGVMYEGVLHTLWHTTRGAAIRSGEGRLTPYWGSVKEDRITYGGPWKFDRKWNGLDDVQLIIVAPGKAAINIQTKPGIFKTPQGEIGAVSLDYPEGTSGSPILDKNGDIVGLYGNGVILGNGSYVSAIVQGEREEEPVPEAYNADMLRKKQLTVLDLHPGAGKTRRILPQIIKDAIQRRLRTAVLAPTRVVAAEMAEALKGLPVRYLTPAVNREHSGTEIVDVMCHATLTHRLMSPLRAPNYNLFVMDEAHFTDPASIAARGYIATKVELGEAAAIFMTATPPGTHDPFPDTNAPVTDIQAEVPDRAWSSGFEWITEYTGKTVWFVASVKMGNEIAQCLQRAGKKVIQLNRKSYDTEYPKCKNGDWDFVITTDISEMGANFGASRVIDCRKSVKPTILEEGEGRVILSNPSPITSASAAQRRGRVGRNPSQIGDEYHYGGGTSEDDTIAAHWTEAKIMLDNIHLPNGLVAQMYGPERDKAFTMDGEYRLRGEERKTFLELLRTADLPVWLAYKVASNGIQYTDRKWCFDGPRSNIILEDNNEVEIVTRTGERKMLKPRWLDARVYADHQSLKWFKDFAAGKRSAVGFLEVLGRMPEHFAGKTREAFDTMYLVATAEKGGKAHRMALEELPDALETITLIVALAVMTAGVFLLLVQRRGIGKLGLGGMVLGLATFFLWMADVSGTKIAGTLLLALLMMIVLIPEPEKQRSQTDNQLAVFLICVLLVVGVVAANEYGMLERTKSDLGKIFSSTRQPQSALPLPSMNALALDLRPATAWALYGGSTVVLTPLIKHLVTSEYITTSLASISAQAGSLFNLPRGLPFTELDFTVVLVFLGCWGQVSLTTLITAAALATLHYGYMLPGWQAEALRAAQRRTAAGIMKNAVVDGLVATDVPELERTTPLMQKKVGQILLIGVSAAALLVNPCVTTVREAGILISAALLTLWDNGAIAVWNSTTATGLCHVIRGNWLAGASIAWTLIKNADKPACKRGRPGGRTLGEQWKEKLNGLSKEDFLKYRKEAITEVDRSAARKARRDGNKTGGHPVSRGSAKLRWMVERQFVKPIGKVVDLGCGRGGWSYYAATLKGVQEVRGYTKGGPGHEEPMLMQSYGWNLVTMKSGVDVYYKPSEPCDTLFCDIGESSSSAEVEEQRTLRILEMVSDWLQRGPREFCIKVLCPYMPRVMERLEVLQRRYGGGLVRVPLSRNSNHEMYWVSGAAGNIVHAVNMTSQVLIGRMEKRTWHGPKYEEDVNLGSGTRAVGKPQPHTNQEKIKARIQRLKEEYAATWHHDKDHPYRTWTYHGSYEVKPTGSASSLVNGVVRLMSKPWDAILNVTTMAMTDTTPFGQQRVFKEKVDTKAPEPPSGVREVMDETTNWLWAFLAREKKPRLCTREEFKRKVNSNAALGAMFEEQNQWSSAREAVEDPRFWEMVDEERENHLKGECHTCIYNMMGKREKKLGEFGKAKGSRAIWFMWLGARFLEFEALGFLNEDHWLGRKNSGGGVEGLGVQKLGYILREMSHHSGGKMYADDTAGWDTRITRADLDNEAKVLELMEGEHRQLARAIIELTYKHKVVKVMRPGTDGKTVMDVISREDQRGSGQVVTYALNTFTNIAVQLIRLMEAEGVIGQEHLESLPRKTKYAVRTWLFENGEERVTRMAVSGDDCVVKPLDDRFANALHFLNSMSKVRKDVPEWKPSSGWHDWQQVPFCSNHFQELIMKDGRTLVVPCRGQDELIGRARVSPGSGWNVRDTACLAKAYAQMWLLLYFHRRDLRLMANAICSAVPSNWVPTGRTSWSVHATGEWMTTDDMLEVWNKVWIQDNEWMLDKTPVQSWTDIPYTGKREDIWCGSLIGTRTRATWAENIYAAINQVRAIIGQEKYRDYMLSLRRYEEVNVQEDRVL.

The Cytoplasmic segment spans residues 1–106 (MSKKPGGPGR…NRGTKKKRGN (106 aa)). Residues 2–15 (SKKPGGPGRNRAIN) are interaction with host EXOC1. The segment at 37–72 (LLDGRGPVRFVLALMTFFKFTALAPTKALLGRWKRI) is hydrophobic; homodimerization of capsid protein C. The propeptide at 105-126 (GNNGPGLVMIITLMTVVSMVSS) is ER anchor for the capsid protein C, removed in mature form by serine protease NS3. The chain crosses the membrane as a helical span at residues 107–126 (NGPGLVMIITLMTVVSMVSS). The Extracellular segment spans residues 127 to 248 (LKLSNFQGKV…DSTKASRYLM (122 aa)). Residue Asn141 is glycosylated (N-linked (GlcNAc...) asparagine; by host). A helical transmembrane segment spans residues 249 to 273 (KTENWIIRNPGYAFVAVLLGWMLGS). At 274–278 (NNGQR) the chain is on the cytoplasmic side. Residues 279 to 293 (VVFVVLLLLVAPAYS) form a helical membrane-spanning segment. The Extracellular portion of the chain corresponds to 294–745 (FNCLGMSNRD…QVFGGAFRTL (452 aa)). Cystine bridges form between Cys296–Cys323, Cys353–Cys409, Cys353–Cys414, Cys367–Cys398, Cys385–Cys409, Cys385–Cys414, Cys483–Cys580, and Cys597–Cys628. The segment at 391 to 404 (DRGWGNGCGLFGKG) is fusion peptide. Residues 746 to 766 (FGGMSWITQGLMGALLLWMGV) form a helical membrane-spanning segment. Residues 767–772 (NARDRS) lie on the Cytoplasmic side of the membrane. Residues 773 to 793 (IALVMLATGGVLLFLATNVHA) form a helical membrane-spanning segment. Residues 794–1218 (DSGCAIDVGR…AFAEANSGGD (425 aa)) lie on the Extracellular side of the membrane. 2 disulfides stabilise this stretch: Cys797/Cys808 and Cys848/Cys936. Asn923, Asn968, and Asn1000 each carry an N-linked (GlcNAc...) asparagine; by host glycan. Intrachain disulfides connect Cys972–Cys1016, Cys1073–Cys1122, Cys1084–Cys1105, Cys1084–Cys1106, Cys1105–Cys1109, and Cys1106–Cys1109. A helical membrane pass occupies residues 1219 to 1239 (VVHLALIAAFKIQPGFLAMTF). At 1240–1249 (LRGKWTNQEN) the chain is on the cytoplasmic side. The chain crosses the membrane as a helical span at residues 1250–1270 (ILLALGAAFFQMAATDLNFSL). Topologically, residues 1271–1286 (PGILNATATAWMLLRA) are lumenal. Residues 1287 to 1307 (ATQPSTSAIVMPLLCLLAPGM) form a helical membrane-spanning segment. A topological domain (cytoplasmic) is located at residue Arg1308. Residues 1309 to 1329 (LLYLDTYRITLIIIGICSLIG) form a helical membrane-spanning segment. Residues 1330-1340 (ERRRAAAKKKG) are Lumenal-facing. A helical transmembrane segment spans residues 1341–1361 (AVLLGLALTSTGQFSASVMAA). Over 1362-1373 (GLMACNPNKKRG) the chain is Cytoplasmic. A helical transmembrane segment spans residues 1374–1394 (WPATEVLTAVGLMFAIVGGLA). The Lumenal portion of the chain corresponds to 1395-1397 (ELD). Residues 1398–1418 (VDSMSIPFVLAGLMAVSYTIS) form a helical membrane-spanning segment. Residues 1419-1475 (GKSTDLWLERAADITWETDAAITGTSQRLDVKLDDDGDFHLINDPGVPWKIWVIRMT) lie on the Cytoplasmic side of the membrane. Residues 1426–1465 (LERAADITWETDAAITGTSQRLDVKLDDDGDFHLINDPGV) form an interacts with and activates NS3 protease region. An intramembrane region (helical) is located at residues 1476 to 1496 (ALGFAAWTPWAIIPAGIGYWL). Over 1497–2173 (TVKYAKRGGV…MALEELPDAL (677 aa)) the chain is Cytoplasmic. The Peptidase S7 domain occupies 1504-1681 (GGVFWDTPAP…EREEEPVPEA (178 aa)). Active-site charge relay system; for serine protease NS3 activity residues include His1554, Asp1578, and Ser1638. The 157-residue stretch at 1684 to 1840 (ADMLRKKQLT…DTNAPVTDIQ (157 aa)) folds into the Helicase ATP-binding domain. An important for RNA-binding region spans residues 1688–1691 (RKKQ). Residue 1697–1704 (LHPGAGKT) coordinates ATP. The DEAH box signature appears at 1788–1791 (DEAH). One can recognise a Helicase C-terminal domain in the interval 1851-2016 (GFEWITEYTG…GLVAQMYGPE (166 aa)). The residue at position 1892 (Lys1892) is an N6-acetyllysine; by host. The tract at residues 1956–1980 (ASAAQRRGRVGRNPSQIGDEYHYGG) is disordered. Positions 2167 to 2171 (EELPD) are regulates the ATPase activity of NS3 helicase. Residues 2174–2194 (ETITLIVALAVMTAGVFLLLV) form a helical membrane-spanning segment. The Lumenal portion of the chain corresponds to 2195–2198 (QRRG). Positions 2199-2219 (IGKLGLGGMVLGLATFFLWMA) form an intramembrane region, helical. A topological domain (lumenal) is located at residue Asp2220. Residues 2221–2241 (VSGTKIAGTLLLALLMMIVLI) traverse the membrane as a helical segment. Residues 2242 to 2256 (PEPEKQRSQTDNQLA) are Cytoplasmic-facing. A helical membrane pass occupies residues 2257-2277 (VFLICVLLVVGVVAANEYGML). At 2278-2313 (ERTKSDLGKIFSSTRQPQSALPLPSMNALALDLRPA) the chain is on the lumenal side. An intramembrane region (helical) is located at residues 2314–2334 (TAWALYGGSTVVLTPLIKHLV). The Lumenal segment spans residues 2335–2368 (TSEYITTSLASISAQAGSLFNLPRGLPFTELDFT). Residues 2369-2389 (VVLVFLGCWGQVSLTTLITAA) traverse the membrane as a helical segment. Topologically, residues 2390-2446 (ALATLHYGYMLPGWQAEALRAAQRRTAAGIMKNAVVDGLVATDVPELERTTPLMQKK) are cytoplasmic. A helical membrane pass occupies residues 2447–2467 (VGQILLIGVSAAALLVNPCVT). Residues 2468 to 2471 (TVRE) lie on the Lumenal side of the membrane. A helical membrane pass occupies residues 2472–2492 (AGILISAALLTLWDNGAIAVW). At 2493 to 3434 (NSTTATGLCH…EVNVQEDRVL (942 aa)) the chain is on the cytoplasmic side. The mRNA cap 0-1 NS5-type MT domain occupies 2530–2795 (GRPGGRTLGE…DVNLGSGTRA (266 aa)). The interval 2567–2587 (SAARKARRDGNKTGGHPVSRG) is disordered. Ser2585 provides a ligand contact to S-adenosyl-L-methionine. Ser2585 is modified (phosphoserine). Catalysis depends on Lys2590, which acts as the For 2'-O-MTase activity. Residues Gly2615, Trp2616, Thr2633, Lys2634, Asp2660, and Val2661 each coordinate S-adenosyl-L-methionine. Catalysis depends on Asp2675, which acts as the For 2'-O-MTase activity. An S-adenosyl-L-methionine-binding site is contributed by Ile2676. Residues Lys2711 and Glu2747 each act as for 2'-O-MTase activity in the active site. Tyr2749 serves as a coordination point for S-adenosyl-L-methionine. Zn(2+) contacts are provided by Glu2969, His2973, Cys2978, and Cys2981. The RdRp catalytic domain occupies 3059-3211 (GKMYADDTAG…KPLDDRFANA (153 aa)). 3 residues coordinate Zn(2+): His3246, Cys3262, and Cys3381.

In the N-terminal section; belongs to the class I-like SAM-binding methyltransferase superfamily. mRNA cap 0-1 NS5-type methyltransferase family. As to quaternary structure, homodimer. Interacts (via N-terminus) with host EXOC1 (via C-terminus); this interaction results in EXOC1 degradation through the proteasome degradation pathway. Forms heterodimers with envelope protein E in the endoplasmic reticulum and Golgi. In terms of assembly, homodimer; in the endoplasmic reticulum and Golgi. Interacts with protein prM. Interacts with non-structural protein 1. As to quaternary structure, homodimer; Homohexamer when secreted. Interacts with envelope protein E. NS1 interacts with NS4B. Interacts with host complement protein CFH; this interaction leads to the degradation of C3. Interacts (via N-terminus) with serine protease NS3. In terms of assembly, forms a heterodimer with serine protease NS3. May form homooligomers. As to quaternary structure, forms a heterodimer with NS2B. Interacts with non-structural protein 2A (via N-terminus). Interacts with NS4B. Interacts with unphosphorylated RNA-directed RNA polymerase NS5; this interaction stimulates RNA-directed RNA polymerase NS5 guanylyltransferase activity. Interacts with serine protease NS3. In terms of assembly, homodimer. Interacts with host STAT2; this interaction inhibits the phosphorylation of the latter, and, when all viral proteins are present (polyprotein), targets STAT2 for degradation. Interacts with serine protease NS3. In terms of processing, specific enzymatic cleavages in vivo yield mature proteins. Cleavages in the lumen of endoplasmic reticulum are performed by host signal peptidase, whereas cleavages in the cytoplasmic side are performed by serine protease NS3. Signal cleavage at the 2K-4B site requires a prior NS3 protease-mediated cleavage at the 4A-2K site. Cleaved in post-Golgi vesicles by a host furin, releasing the mature small envelope protein M, and peptide pr. This cleavage is incomplete as up to 30% of viral particles still carry uncleaved prM. Post-translationally, N-glycosylated. In terms of processing, N-glycosylated. The excreted form is glycosylated and this is required for efficient secretion of the protein from infected cells. Acetylated by host KAT5. Acetylation modulates NS3 RNA-binding and unwinding activities and plays an important positive role for viral replication. Post-translationally, phosphorylated on serines residues. This phosphorylation may trigger NS5 nuclear localization.

The protein resides in the virion. The protein localises to the host nucleus. It localises to the host cytoplasm. It is found in the host perinuclear region. Its subcellular location is the secreted. The protein resides in the virion membrane. The protein localises to the host endoplasmic reticulum membrane. It catalyses the reaction Selective hydrolysis of -Xaa-Xaa-|-Yaa- bonds in which each of the Xaa can be either Arg or Lys and Yaa can be either Ser or Ala.. The catalysed reaction is RNA(n) + a ribonucleoside 5'-triphosphate = RNA(n+1) + diphosphate. It carries out the reaction a ribonucleoside 5'-triphosphate + H2O = a ribonucleoside 5'-diphosphate + phosphate + H(+). The enzyme catalyses ATP + H2O = ADP + phosphate + H(+). It catalyses the reaction a 5'-end (5'-triphosphoguanosine)-ribonucleoside in mRNA + S-adenosyl-L-methionine = a 5'-end (N(7)-methyl 5'-triphosphoguanosine)-ribonucleoside in mRNA + S-adenosyl-L-homocysteine. The catalysed reaction is a 5'-end (N(7)-methyl 5'-triphosphoguanosine)-ribonucleoside in mRNA + S-adenosyl-L-methionine = a 5'-end (N(7)-methyl 5'-triphosphoguanosine)-(2'-O-methyl-ribonucleoside) in mRNA + S-adenosyl-L-homocysteine + H(+). In terms of biological role, plays a role in virus budding by binding to the cell membrane and gathering the viral RNA into a nucleocapsid that forms the core of a mature virus particle. During virus entry, may induce genome penetration into the host cytoplasm after hemifusion induced by the surface proteins. Can migrate to the cell nucleus where it modulates host functions. Overcomes the anti-viral effects of host EXOC1 by sequestering and degrading the latter through the proteasome degradation pathway. Inhibits RNA silencing by interfering with host Dicer. Its function is as follows. Prevents premature fusion activity of envelope proteins in trans-Golgi by binding to envelope protein E at pH6.0. After virion release in extracellular space, gets dissociated from E dimers. Functionally, acts as a chaperone for envelope protein E during intracellular virion assembly by masking and inactivating envelope protein E fusion peptide. prM is the only viral peptide matured by host furin in the trans-Golgi network probably to avoid catastrophic activation of the viral fusion activity in acidic Golgi compartment prior to virion release. prM-E cleavage is inefficient, and many virions are only partially matured. These uncleaved prM would play a role in immune evasion. In terms of biological role, may play a role in virus budding. Exerts cytotoxic effects by activating a mitochondrial apoptotic pathway through M ectodomain. May display a viroporin activity. Binds to host cell surface receptor and mediates fusion between viral and cellular membranes. Envelope protein is synthesized in the endoplasmic reticulum in the form of heterodimer with protein prM. They play a role in virion budding in the ER, and the newly formed immature particle is covered with 60 spikes composed of heterodimer between precursor prM and envelope protein E. The virion is transported to the Golgi apparatus where the low pH causes dissociation of PrM-E heterodimers and formation of E homodimers. prM-E cleavage is inefficient, and many virions are only partially matured. These uncleaved prM would play a role in immune evasion. Its function is as follows. Involved in immune evasion, pathogenesis and viral replication. Once cleaved off the polyprotein, is targeted to three destinations: the viral replication cycle, the plasma membrane and the extracellular compartment. Essential for viral replication. Required for formation of the replication complex and recruitment of other non-structural proteins to the ER-derived membrane structures. Excreted as a hexameric lipoparticle that plays a role against host immune response. Antagonizing the complement function. Binds to the host macrophages and dendritic cells. Inhibits signal transduction originating from Toll-like receptor 3 (TLR3). Functionally, component of the viral RNA replication complex that functions in virion assembly and antagonizes the host alpha/beta interferon antiviral response. In terms of biological role, required cofactor for the serine protease function of NS3. May have membrane-destabilizing activity and form viroporins. Displays three enzymatic activities: serine protease, NTPase and RNA helicase. NS3 serine protease, in association with NS2B, performs its autocleavage and cleaves the polyprotein at dibasic sites in the cytoplasm: C-prM, NS2A-NS2B, NS2B-NS3, NS3-NS4A, NS4A-2K and NS4B-NS5. NS3 RNA helicase binds RNA and unwinds dsRNA in the 3' to 5' direction. Its function is as follows. Regulates the ATPase activity of the NS3 helicase activity. NS4A allows NS3 helicase to conserve energy during unwinding. Functionally, functions as a signal peptide for NS4B and is required for the interferon antagonism activity of the latter. In terms of biological role, induces the formation of ER-derived membrane vesicles where the viral replication takes place. Inhibits interferon (IFN)-induced host STAT1 phosphorylation and nuclear translocation, thereby preventing the establishment of cellular antiviral state by blocking the IFN-alpha/beta pathway. Inhibits STAT2 translocation in the nucleus after IFN-alpha treatment. Replicates the viral (+) and (-) RNA genome, and performs the capping of genomes in the cytoplasm. NS5 methylates viral RNA cap at guanine N-7 and ribose 2'-O positions. Besides its role in RNA genome replication, also prevents the establishment of cellular antiviral state by blocking the interferon-alpha/beta (IFN-alpha/beta) signaling pathway. Inhibits host TYK2 and STAT2 phosphorylation, thereby preventing activation of JAK-STAT signaling pathway. In Usutu virus (USUV), this protein is Genome polyprotein.